Here is a 226-residue protein sequence, read N- to C-terminus: Protein YAE1 homolog (226 aa).

The deca-GX3 motif; required for interaction with LTO1 stretch occupies residues 45 to 85 (GYRDGIDAGKAVTLQQGFNQGYKKGAEVILNYGRLRGTLSA).

As to quaternary structure, forms a complex with LTO1.

The protein localises to the cytoplasm. Its subcellular location is the nucleus. In terms of biological role, the complex LTO1:YAE1 functions as a target specific adapter that probably recruits apo-ABCE1 to the cytosolic iron-sulfur protein assembly (CIA) complex machinery. May be required for biogenesis of the large ribosomal subunit and initiation of translation. The polypeptide is Protein YAE1 homolog (Homo sapiens (Human)).